Here is a 213-residue protein sequence, read N- to C-terminus: Ribosomal RNA large subunit methyltransferase E (213 aa).

The S-adenosyl-L-methionine site is built by G60, W62, D80, D96, and D121. The Proton acceptor role is filled by K161.

The protein belongs to the class I-like SAM-binding methyltransferase superfamily. RNA methyltransferase RlmE family.

The protein resides in the cytoplasm. It catalyses the reaction uridine(2552) in 23S rRNA + S-adenosyl-L-methionine = 2'-O-methyluridine(2552) in 23S rRNA + S-adenosyl-L-homocysteine + H(+). Functionally, specifically methylates the uridine in position 2552 of 23S rRNA at the 2'-O position of the ribose in the fully assembled 50S ribosomal subunit. The chain is Ribosomal RNA large subunit methyltransferase E from Xylella fastidiosa (strain 9a5c).